The following is a 394-amino-acid chain: RNA demethylase ALKBH5 (394 aa).

2 disordered regions span residues 1–26 (MAAA…YKAG) and 48–83 (AEPY…EEAR). Residue A2 is modified to N-acetylalanine. K57 participates in a covalent cross-link: Glycyl lysine isopeptide (Lys-Gly) (interchain with G-Cter in ubiquitin). The segment covering 59 to 83 (KYPEDSDPERSDFEEQQLQKEEEAR) has biased composition (basic and acidic residues). 2 positions are modified to phosphoserine: S64 and S69. Residues 67 to 116 (ERSDFEEQQLQKEEEARKVKSGIRQMRLFSQDECAKIEARIDEVVSRAEK) are a coiled coil. K86 is covalently cross-linked (Glycyl lysine isopeptide (Lys-Gly) (interchain with G-Cter in SUMO1)). S87 carries the phosphoserine modification. K132 bears the N6-acetyllysine mark. Y139 is an active-site residue. Residues N193, Y195, and H204 each coordinate 2-oxoglutarate. An intrachain disulfide couples C230 to C267. The residue at position 235 (K235) is an N6-acetyllysine. Residues H266 and R277 each contribute to the 2-oxoglutarate site. A disordered region spans residues 298–394 (SSSVLPPSYA…PARKVKMRRH (97 aa)). K321 participates in a covalent cross-link: Glycyl lysine isopeptide (Lys-Gly) (interchain with G-Cter in SUMO1). S325 is modified (phosphoserine). K328 is covalently cross-linked (Glycyl lysine isopeptide (Lys-Gly) (interchain with G-Cter in SUMO2)). A compositionally biased stretch (basic and acidic residues) spans 328-349 (KADPDAAHRPRILEMDKEENRR). 2 positions are modified to phosphoserine: S371 and S384.

The protein belongs to the alkB family. In terms of assembly, monomer. Interacts with RBM33; promoting desumoylation by SENP1 and recruitment to N(6)-methyladenosine-containing mRNAs. Interacts (when acetylated by KAT8) with PSPC1; interaction facilitates recognition of N(6)-methyladenosine (m6A) mRNA. Fe(2+) is required as a cofactor. In terms of processing, phosphorylated at Ser-87 and Ser-325 in response to reactive oxygen species (ROS), promoting sumoylation and inactivation. Acetylated by KAT8 at Lys-235, promoting interaction with PSPC1, thereby facilitating recognition of N(6)-methyladenosine (m6A) mRNA by ALKBH5. Deacetylated at Lys-235 by HDAC7. Post-translationally, sumoylated at Lys-86 and Lys-321 by PIAS4 following phosphorylation at Ser-87 and Ser-325 in response to reactive oxygen species (ROS), inhibiting the RNA demethylase activity. Desumoylated by SENP1; relieving RNA demethylase inhibition, leading to N(6)-methyladenosine-containing mRNAs demethylation. In terms of processing, ubiquitinated at Lys-57 via 'Lys-48'-linked polyubiquitin chain, leading to its degradation by the proteasome. Deubiquitinated at Lys-57 by USP9X, promoting its stabilizazion.

The protein localises to the nucleus speckle. The enzyme catalyses an N(6)-methyladenosine in mRNA + 2-oxoglutarate + O2 = an adenosine in mRNA + formaldehyde + succinate + CO2. With respect to regulation, RNA demethylase activity is inhibited following sumoylation. Inhibition is relieved following desumoylation. Its function is as follows. Dioxygenase that specifically demethylates N(6)-methyladenosine (m6A) RNA, the most prevalent internal modification of messenger RNA (mRNA) in higher eukaryotes. Demethylates RNA by oxidative demethylation, which requires molecular oxygen, alpha-ketoglutarate and iron. Demethylation of m6A mRNA affects mRNA processing, translation and export. Can also demethylate N(6)-methyladenosine in single-stranded DNA (in vitro). Required for the late meiotic and haploid phases of spermatogenesis by mediating m6A demethylation in spermatocytes and round spermatids: m6A demethylation of target transcripts is required for correct splicing and the production of longer 3'-UTR mRNAs in male germ cells. Involved in paraspeckle assembly, a nuclear membraneless organelle, by undergoing liquid-liquid phase separation. Paraspeckle assembly is coupled with m6A demethylation of RNAs, such as NEAT1 non-coding RNA. Also acts as a negative regulator of T-cell development: inhibits gamma-delta T-cell proliferation via demethylation of JAG1 and NOTCH2 transcripts. Inhibits regulatory T-cell (Treg) recruitment by mediating demethylation and destabilization of CCL28 mRNAs. This chain is RNA demethylase ALKBH5 (ALKBH5), found in Bos taurus (Bovine).